Reading from the N-terminus, the 362-residue chain is Probable peptidyl-prolyl cis-trans isomerase C27F1.06c (362 aa).

S69 bears the Phosphoserine mark. The disordered stretch occupies residues 144 to 274; sequence DEFSSDEEEM…KVKGDGPAAK (131 aa). Composition is skewed to acidic residues over residues 146-167 and 175-189; these read FSSDEEEMDDISVTSSEEEEEE and LNSDEEDAEQAEEEI. S177 carries the phosphoserine modification. Over residues 190-218 the composition is skewed to basic and acidic residues; sequence LEKPVPKDEVAEKHSKDKLKKEEKEKKTA. A PPIase FKBP-type domain is found at 276 to 362; sequence KKRVSMRYIG…VFDVKLLAVN (87 aa).

The protein belongs to the FKBP-type PPIase family. FKBP3/4 subfamily.

The catalysed reaction is [protein]-peptidylproline (omega=180) = [protein]-peptidylproline (omega=0). PPIases accelerate the folding of proteins. It catalyzes the cis-trans isomerization of proline imidic peptide bonds in oligopeptides. The protein is Probable peptidyl-prolyl cis-trans isomerase C27F1.06c of Schizosaccharomyces pombe (strain 972 / ATCC 24843) (Fission yeast).